Reading from the N-terminus, the 621-residue chain is 1-deoxy-D-xylulose-5-phosphate synthase (621 aa).

Residues H80 and 121–123 (GHS) contribute to the thiamine diphosphate site. Position 152 (D152) interacts with Mg(2+). Thiamine diphosphate-binding positions include 153–154 (GA), N181, Y288, and E370. N181 provides a ligand contact to Mg(2+).

This sequence belongs to the transketolase family. DXPS subfamily. Homodimer. Requires Mg(2+) as cofactor. The cofactor is thiamine diphosphate.

The enzyme catalyses D-glyceraldehyde 3-phosphate + pyruvate + H(+) = 1-deoxy-D-xylulose 5-phosphate + CO2. It functions in the pathway metabolic intermediate biosynthesis; 1-deoxy-D-xylulose 5-phosphate biosynthesis; 1-deoxy-D-xylulose 5-phosphate from D-glyceraldehyde 3-phosphate and pyruvate: step 1/1. Functionally, catalyzes the acyloin condensation reaction between C atoms 2 and 3 of pyruvate and glyceraldehyde 3-phosphate to yield 1-deoxy-D-xylulose-5-phosphate (DXP). In Serratia proteamaculans (strain 568), this protein is 1-deoxy-D-xylulose-5-phosphate synthase.